The chain runs to 429 residues: Serine hydroxymethyltransferase (429 aa).

(6S)-5,6,7,8-tetrahydrofolate contacts are provided by residues Leu127 and 131–133; that span reads GHL. Lys236 bears the N6-(pyridoxal phosphate)lysine mark. Residue Glu252 participates in (6S)-5,6,7,8-tetrahydrofolate binding.

The protein belongs to the SHMT family. Homodimer. It depends on pyridoxal 5'-phosphate as a cofactor.

The protein resides in the cytoplasm. It catalyses the reaction (6R)-5,10-methylene-5,6,7,8-tetrahydrofolate + glycine + H2O = (6S)-5,6,7,8-tetrahydrofolate + L-serine. It functions in the pathway one-carbon metabolism; tetrahydrofolate interconversion. Its pathway is amino-acid biosynthesis; glycine biosynthesis; glycine from L-serine: step 1/1. Catalyzes the reversible interconversion of serine and glycine with tetrahydrofolate (THF) serving as the one-carbon carrier. This reaction serves as the major source of one-carbon groups required for the biosynthesis of purines, thymidylate, methionine, and other important biomolecules. Also exhibits THF-independent aldolase activity toward beta-hydroxyamino acids, producing glycine and aldehydes, via a retro-aldol mechanism. The sequence is that of Serine hydroxymethyltransferase from Rhodospirillum centenum (strain ATCC 51521 / SW).